Reading from the N-terminus, the 483-residue chain is Siroheme synthase (483 aa).

The segment at 1-203 (MNYFPIFANL…RQNTLAEREL (203 aa)) is precorrin-2 dehydrogenase /sirohydrochlorin ferrochelatase. NAD(+) is bound by residues 22–23 (AV) and 43–44 (KH). A Phosphoserine modification is found at Ser-128. Residues 214–483 (GFVSLVGAGP…LGTGQEQQAA (270 aa)) are uroporphyrinogen-III C-methyltransferase. Pro-223 contributes to the S-adenosyl-L-methionine binding site. Asp-246 functions as the Proton acceptor in the catalytic mechanism. Lys-268 acts as the Proton donor in catalysis. Residues 299–301 (GGD), Val-304, 329–330 (TA), Met-381, and Gly-410 each bind S-adenosyl-L-methionine.

The protein in the N-terminal section; belongs to the precorrin-2 dehydrogenase / sirohydrochlorin ferrochelatase family. This sequence in the C-terminal section; belongs to the precorrin methyltransferase family.

The enzyme catalyses uroporphyrinogen III + 2 S-adenosyl-L-methionine = precorrin-2 + 2 S-adenosyl-L-homocysteine + H(+). It carries out the reaction precorrin-2 + NAD(+) = sirohydrochlorin + NADH + 2 H(+). It catalyses the reaction siroheme + 2 H(+) = sirohydrochlorin + Fe(2+). Its pathway is cofactor biosynthesis; adenosylcobalamin biosynthesis; precorrin-2 from uroporphyrinogen III: step 1/1. It participates in cofactor biosynthesis; adenosylcobalamin biosynthesis; sirohydrochlorin from precorrin-2: step 1/1. The protein operates within porphyrin-containing compound metabolism; siroheme biosynthesis; precorrin-2 from uroporphyrinogen III: step 1/1. It functions in the pathway porphyrin-containing compound metabolism; siroheme biosynthesis; siroheme from sirohydrochlorin: step 1/1. Its pathway is porphyrin-containing compound metabolism; siroheme biosynthesis; sirohydrochlorin from precorrin-2: step 1/1. Its function is as follows. Multifunctional enzyme that catalyzes the SAM-dependent methylations of uroporphyrinogen III at position C-2 and C-7 to form precorrin-2 via precorrin-1. Then it catalyzes the NAD-dependent ring dehydrogenation of precorrin-2 to yield sirohydrochlorin. Finally, it catalyzes the ferrochelation of sirohydrochlorin to yield siroheme. The chain is Siroheme synthase from Neisseria meningitidis serogroup C / serotype 2a (strain ATCC 700532 / DSM 15464 / FAM18).